We begin with the raw amino-acid sequence, 621 residues long: Chaperone protein HscA homolog (621 aa).

This sequence belongs to the heat shock protein 70 family.

Its function is as follows. Chaperone involved in the maturation of iron-sulfur cluster-containing proteins. Has a low intrinsic ATPase activity which is markedly stimulated by HscB. The sequence is that of Chaperone protein HscA homolog from Pseudomonas fluorescens (strain Pf0-1).